The chain runs to 890 residues: Receptor like protein 23 (890 aa).

The N-terminal stretch at 1-22 (MSKALLHLHFLSLFLLCCVCHS) is a signal peptide. Residues 23-850 (SIFTLNFHFT…EEEEEVLNGR (828 aa)) lie on the Extracellular side of the membrane. N-linked (GlcNAc...) asparagine glycosylation is found at asparagine 58, asparagine 70, asparagine 91, asparagine 109, and asparagine 145. LRR repeat units follow at residues 97-121 (FHQLRYVDLQNNNLTSSSLPSGFGN), 123-145 (KRLEGLFLSSNGFLGQVPSSFSN), 146-171 (LTMLAQLDLSYNKLTGSFPLVRGLRK), 173-195 (IVLDLSYNHFSGTLNPNSSLFEL), 196-218 (HQLRYLNLAFNNFSSSLPSKFGN), 220-243 (HRLENLILSSNGFSGQVPSTISNL), 244-268 (TRLTKLYLDQNKLTSSFPLVQNLTN), 270-290 (YELDLSYNKFFGVIPSSLLTL), 291-316 (PFLAHLALRENNLAGSVEVSNSSTSS), 318-339 (LEIMYLGSNHFEGQILEPISKL), 340-363 (INLKHLDLSFLNTSYPIDLKLFSS), 364-389 (LKSLRSLDLSGNSISSASLSSDSYIP), 391-411 (TLEMLTLRHCDINEFPNILKT), 412-436 (LKELVYIDISNNRMKGKIPEWLWSL), 438-461 (LLQSVTLGNNYFTGFQGSAEILVN), 462-485 (SSVLLLYLDSNNFEGALPDLPLSI), 487-506 (GFGVASNSFTSEIPLSICNR), 507-527 (SSLAAIDLSYNNFTGPIPPCL), 528-551 (RNLELVYLRNNNLEGSIPDALCDG), 553-575 (SLRTLDVSHNRLTGKLPRSFVNC), 577-598 (SLKFLSVINNRIEDTFPFWLKA), 599-623 (LPNLQVLTLRSNRFYGPISPPHQGP), 626-650 (FPELRIFEISDNKFTGSLPPNYFVN), 699-724 (LTSYAAIDFSGNRLEGQIPESIGLLK), 726-747 (LIAVNISNNAFTGHIPLSMANL), 748-771 (ENLESLDMSRNQLSGTIPNGLGSI), and 773-796 (FLAYINVSHNQLTGEIPQGTQITG). Asparagine 189, asparagine 207, asparagine 242, and asparagine 265 each carry an N-linked (GlcNAc...) asparagine glycan. An N-linked (GlcNAc...) asparagine glycan is attached at asparagine 311. Asparagine 351 is a glycosylation site (N-linked (GlcNAc...) asparagine). Asparagine 461 carries N-linked (GlcNAc...) asparagine glycosylation. Residues asparagine 505 and asparagine 518 are each glycosylated (N-linked (GlcNAc...) asparagine). A glycan (N-linked (GlcNAc...) asparagine) is linked at asparagine 574. Asparagine 730 carries N-linked (GlcNAc...) asparagine glycosylation. Residue asparagine 778 is glycosylated (N-linked (GlcNAc...) asparagine). Residues 851–871 (AVAIGYGSGLLLGLAIAQVIA) form a helical membrane-spanning segment. Topologically, residues 872–890 (SYKPEWLVKIIGLNKRRKR) are cytoplasmic.

Belongs to the RLP family. In terms of assembly, directly interacts with a 20-mer fragment (nlp20) from NLPs through its extracellular LRR domain. Component of a trimeric complex composed of RLP23, SOBIR1 and BAK1. BAK1 is recruited into a pre-formed RLP23-SOBIR1 complex in a ligand-dependent manner. Interacts with SOBIR1.

It localises to the cell membrane. In terms of biological role, involved in the perception of necrosis and ethylene-inducing peptide 1-like proteins (NLPs), that act as extracellular signals mediating immune activation. Component of the RLP23-SOBIR1-BAK1 complex that mediates NLP-triggered immunity. The sequence is that of Receptor like protein 23 from Arabidopsis thaliana (Mouse-ear cress).